Reading from the N-terminus, the 234-residue chain is (5-formylfuran-3-yl)methyl phosphate synthase (234 aa).

The Schiff-base intermediate with substrate role is filled by Lys27. Lys85 (proton acceptor) is an active-site residue.

The protein belongs to the MfnB family.

The enzyme catalyses 2 D-glyceraldehyde 3-phosphate = 4-(hydroxymethyl)-2-furancarboxaldehyde phosphate + phosphate + 2 H2O. Its pathway is cofactor biosynthesis; methanofuran biosynthesis. Functionally, catalyzes the formation of 4-(hydroxymethyl)-2-furancarboxaldehyde phosphate (4-HFC-P) from two molecules of glyceraldehyde-3-P (GA-3-P). This is (5-formylfuran-3-yl)methyl phosphate synthase from Methanosarcina barkeri (strain Fusaro / DSM 804).